A 586-amino-acid chain; its full sequence is Protein cereblon (586 aa).

Disordered regions lie at residues M1 to W114 and S158 to G194. Positions G14–A37 are enriched in basic and acidic residues. Residues M75–A85 show a composition bias toward acidic residues. Residues S86–S96 are compositionally biased toward polar residues. Basic and acidic residues predominate over residues Q159 to E168. Positions T170 to E179 are enriched in acidic residues. Pro residues predominate over residues D180–P190. The Lon N-terminal domain occupies H226–S452. Positions E451 to K560 constitute a CULT domain. Residues C456, C459, C525, and C528 each coordinate Zn(2+).

It belongs to the CRBN family. As to quaternary structure, likely a component of a DCX (DDB1-CUL4-X-box) protein ligase complex. May interact with pic/DDB1. Ubiquitinated.

The protein resides in the nucleus. It functions in the pathway protein modification; protein ubiquitination. Its function is as follows. Substrate recognition component of a DCX (DDB1-CUL4-X-box) E3 protein ligase complex that mediates the ubiquitination and subsequent proteasomal degradation of target proteins. Has an essential role in mediating growth by negatively regulating insulin signaling. It also has a role in maintaining presynaptic function in the neuromuscular junction synapses of third-instar larvae. In Drosophila erecta (Fruit fly), this protein is Protein cereblon.